The sequence spans 306 residues: Pantothenate kinase (306 aa).

Residue 90–97 participates in ATP binding; that stretch reads GSVAVGKS.

It belongs to the prokaryotic pantothenate kinase family.

The protein localises to the cytoplasm. The catalysed reaction is (R)-pantothenate + ATP = (R)-4'-phosphopantothenate + ADP + H(+). It participates in cofactor biosynthesis; coenzyme A biosynthesis; CoA from (R)-pantothenate: step 1/5. The chain is Pantothenate kinase from Lactococcus lactis subsp. cremoris (strain MG1363).